A 160-amino-acid polypeptide reads, in one-letter code: MAVTKKPDLSDPQLRAKLAKGMGHNYYGEPAWPNDIFYMFPVVIFGTFAGVIGLAVLDPAAIGEPANPFATPLEILPEWYFYPVFQLLRTVPNKLLGVLLMAAVPAGLITVPFIKIYNKFQNPFRRPVATTVFLVGTVAAIWLGIGAALPIDISLTLGLF.

A run of 3 helical transmembrane segments spans residues 36 to 56, 96 to 116, and 131 to 151; these read IFYM…GLAV, LGVL…FIKI, and TVFL…ALPI.

This sequence belongs to the cytochrome b family. PetD subfamily. The 4 large subunits of the cytochrome b6-f complex are cytochrome b6, subunit IV (17 kDa polypeptide, petD), cytochrome f and the Rieske protein, while the 4 small subunits are petG, petL, petM and petN. The complex functions as a dimer.

It is found in the plastid. Its subcellular location is the chloroplast thylakoid membrane. In terms of biological role, component of the cytochrome b6-f complex, which mediates electron transfer between photosystem II (PSII) and photosystem I (PSI), cyclic electron flow around PSI, and state transitions. The sequence is that of Cytochrome b6-f complex subunit 4 from Auxenochlorella protothecoides (Green microalga).